We begin with the raw amino-acid sequence, 338 residues long: uncharacterized protein (338 aa).

Transmembrane regions (helical) follow at residues 11-31 (ILSLLLSIIMGVAVMGSTFAI), 249-269 (IAVFVSATSMTQAGGTGIIPA), and 318-338 (VPTPLPSGCYGGSITFYGLGL).

It localises to the cell membrane. This is an uncharacterized protein from Methanocaldococcus jannaschii (strain ATCC 43067 / DSM 2661 / JAL-1 / JCM 10045 / NBRC 100440) (Methanococcus jannaschii).